The following is a 179-amino-acid chain: Large ribosomal subunit protein uL6 (179 aa).

This sequence belongs to the universal ribosomal protein uL6 family. In terms of assembly, part of the 50S ribosomal subunit.

This protein binds to the 23S rRNA, and is important in its secondary structure. It is located near the subunit interface in the base of the L7/L12 stalk, and near the tRNA binding site of the peptidyltransferase center. The chain is Large ribosomal subunit protein uL6 from Saccharopolyspora erythraea (strain ATCC 11635 / DSM 40517 / JCM 4748 / NBRC 13426 / NCIMB 8594 / NRRL 2338).